The sequence spans 156 residues: Urease accessory protein UreE (156 aa).

A disordered region spans residues 133–156; sequence RPESGAYGSGRTMGHDHGPFHVHA. Residues 145-156 are compositionally biased toward basic and acidic residues; the sequence is MGHDHGPFHVHA.

This sequence belongs to the UreE family.

The protein localises to the cytoplasm. In terms of biological role, involved in urease metallocenter assembly. Binds nickel. Probably functions as a nickel donor during metallocenter assembly. The sequence is that of Urease accessory protein UreE from Rhodobacter capsulatus (Rhodopseudomonas capsulata).